A 196-amino-acid chain; its full sequence is Adenylate kinase (196 aa).

9-17 lines the ATP pocket; it reads GIPGVGKST.

Belongs to the archaeal adenylate kinase family.

The protein localises to the cytoplasm. It catalyses the reaction AMP + ATP = 2 ADP. This Pyrococcus abyssi (strain GE5 / Orsay) protein is Adenylate kinase (adkA).